The primary structure comprises 140 residues: Lysozyme B (140 aa).

The first 18 residues, 1–18, serve as a signal peptide directing secretion; sequence MKAFIVLVALALAAPALG. Positions 19–140 constitute a C-type lysozyme domain; it reads RTMDRCSLAR…GWLPSIDDCF (122 aa). 4 disulfides stabilise this stretch: Cys-24/Cys-139, Cys-45/Cys-129, Cys-80/Cys-96, and Cys-92/Cys-110. Residues Glu-50 and Asp-68 contribute to the active site.

The protein belongs to the glycosyl hydrolase 22 family. Found in the midgut.

The enzyme catalyses Hydrolysis of (1-&gt;4)-beta-linkages between N-acetylmuramic acid and N-acetyl-D-glucosamine residues in a peptidoglycan and between N-acetyl-D-glucosamine residues in chitodextrins.. In terms of biological role, unlikely to play an active role in the humoral immune defense. May have a function in the digestion of bacteria in the food. This is Lysozyme B (LysB) from Drosophila melanogaster (Fruit fly).